Reading from the N-terminus, the 2471-residue chain is MPALRPALLWALLALWLCCAAPAHALQCRDGYEPCVNEGMCVTYHNGTGYCKCPEGFLGEYCQHRDPCEKNRCQNGGTCVAQAMLGKATCRCASGFTGEDCQYSTSHPCFVSRPCLNGGTCHMLSRDTYECTCQVGFTGKECQWTDACLSHPCANGSTCTTVANQFSCKCLTGFTGQKCETDVNECDIPGHCQHGGTCLNLPGSYQCQCPQGFTGQYCDSLYVPCAPSPCVNGGTCRQTGDFTFECNCLPGFEGSTCERNIDDCPNHRCQNGGVCVDGVNTYNCRCPPQWTGQFCTEDVDECLLQPNACQNGGTCANRNGGYGCVCVNGWSGDDCSENIDDCAFASCTPGSTCIDRVASFSCMCPEGKAGLLCHLDDACISNPCHKGALCDTNPLNGQYICTCPQGYKGADCTEDVDECAMANSNPCEHAGKCVNTDGAFHCECLKGYAGPRCEMDINECHSDPCQNDATCLDKIGGFTCLCMPGFKGVHCELEINECQSNPCVNNGQCVDKVNRFQCLCPPGFTGPVCQIDIDDCSSTPCLNGAKCIDHPNGYECQCATGFTGVLCEENIDNCDPDPCHHGQCQDGIDSYTCICNPGYMGAICSDQIDECYSSPCLNDGRCIDLVNGYQCNCQPGTSGVNCEINFDDCASNPCIHGICMDGINRYSCVCSPGFTGQRCNIDIDECASNPCRKGATCINGVNGFRCICPEGPHHPSCYSQVNECLSNPCIHGNCTGGLSGYKCLCDAGWVGINCEVDKNECLSNPCQNGGTCDNLVNGYRCTCKKGFKGYNCQVNIDECASNPCLNQGTCFDDISGYTCHCVLPYTGKNCQTVLAPCSPNPCENAAVCKESPNFESYTCLCAPGWQGQRCTIDIDECISKPCMNHGLCHNTQGSYMCECPPGFSGMDCEEDIDDCLANPCQNGGSCMDGVNTFSCLCLPGFTGDKCQTDMNECLSEPCKNGGTCSDYVNSYTCKCQAGFDGVHCENNINECTESSCFNGGTCVDGINSFSCLCPVGFTGSFCLHEINECSSHPCLNEGTCVDGLGTYRCSCPLGYTGKNCQTLVNLCSRSPCKNKGTCVQKKAESQCLCPSGWAGAYCDVPNVSCDIAASRRGVLVEHLCQHSGVCINAGNTHYCQCPLGYTGSYCEEQLDECASNPCQHGATCSDFIGGYRCECVPGYQGVNCEYEVDECQNQPCQNGGTCIDLVNHFKCSCPPGTRGLLCEENIDDCARGPHCLNGGQCMDRIGGYSCRCLPGFAGERCEGDINECLSNPCSSEGSLDCIQLTNDYLCVCRSAFTGRHCETFVDVCPQMPCLNGGTCAVASNMPDGFICRCPPGFSGARCQSSCGQVKCRKGEQCVHTASGPRCFCPSPRDCESGCASSPCQHGGSCHPQRQPPYYSCQCAPPFSGSRCELYTAPPSTPPATCLSQYCADKARDGVCDEACNSHACQWDGGDCSLTMENPWANCSSPLPCWDYINNQCDELCNTVECLFDNFECQGNSKTCKYDKYCADHFKDNHCDQGCNSEECGWDGLDCAADQPENLAEGTLVIVVLMPPEQLLQDARSFLRALGTLLHTNLRIKRDSQGELMVYPYYGEKSAAMKKQRMTRRSLPGEQEQEVAGSKVFLEIDNRQCVQDSDHCFKNTDAAAALLASHAIQGTLSYPLVSVVSESLTPERTQLLYLLAVAVVIILFIILLGVIMAKRKRKHGSLWLPEGFTLRRDASNHKRREPVGQDAVGLKNLSVQVSEANLIGTGTSEHWVDDEGPQPKKVKAEDEALLSEEDDPIDRRPWTQQHLEAADIRRTPSLALTPPQAEQEVDVLDVNVRGPDGCTPLMLASLRGGSSDLSDEDEDAEDSSANIITDLVYQGASLQAQTDRTGEMALHLAARYSRADAAKRLLDAGADANAQDNMGRCPLHAAVAADAQGVFQILIRNRVTDLDARMNDGTTPLILAARLAVEGMVAELINCQADVNAVDDHGKSALHWAAAVNNVEATLLLLKNGANRDMQDNKEETPLFLAAREGSYEAAKILLDHFANRDITDHMDRLPRDVARDRMHHDIVRLLDEYNVTPSPPGTVLTSALSPVICGPNRSFLSLKHTPMGKKSRRPSAKSTMPTSLPNLAKEAKDAKGSRRKKSLSEKVQLSESSVTLSPVDSLESPHTYVSDTTSSPMITSPGILQASPNPMLATAAPPAPVHAQHALSFSNLHEMQPLAHGASTVLPSVSQLLSHHHIVSPGSGSAGSLSRLHPVPVPADWMNRMEVNETQYNEMFGMVLAPAEGTHPGIAPQSRPPEGKHITTPREPLPPIVTFQLIPKGSIAQPAGAPQPQSTCPPAVAGPLPTMYQIPEMARLPSVAFPTAMMPQQDGQVAQTILPAYHPFPASVGKYPTPPSQHSYASSNAAERTPSHSGHLQGEHPYLTPSPESPDQWSSSSPHSASDWSDVTTSPTPGGAGGGQRGPGTHMSEPPHNNMQVYA.

Residues 1–25 (MPALRPALLWALLALWLCCAAPAHA) form the signal peptide. EGF-like domains lie at 26–63 (LQCRDGYEPCVNEGMCVTYHNGTGYCKCPEGFLGEYCQ), 64–102 (HRDPCEKNRCQNGGTCVAQAMLGKATCRCASGFTGEDCQ), 105–143 (TSHPCFVSRPCLNGGTCHMLSRDTYECTCQVGFTGKECQ), and 144–180 (WTDACLSHPCANGSTCTTVANQFSCKCLTGFTGQKCE). At 26–1677 (LQCRDGYEPC…SESLTPERTQ (1652 aa)) the chain is on the extracellular side. 84 cysteine pairs are disulfide-bonded: C28–C41, C35–C51, C53–C62, C68–C79, C73–C90, C92–C101, C109–C121, C115–C131, C133–C142, C148–C159, C153–C168, C170–C179, C186–C198, C192–C207, C209–C218, C225–C236, C230–C246, C248–C257, C264–C275, C269–C284, C286–C295, C302–C315, C309–C324, C326–C335, C342–C353, C347–C362, C364–C373, C379–C390, C384–C401, C403–C412, C419–C433, C427–C442, C444–C453, C460–C471, C465–C480, C482–C491, C498–C509, C503–C518, C520–C529, C536–C547, C541–C556, C558–C567, C574–C584, C579–C593, C595–C604, C611–C622, C616–C631, C633–C642, C649–C659, C654–C668, C670–C679, C686–C697, C691–C706, C708–C717, C724–C734, C729–C743, C745–C754, C761–C772, C766–C781, C783–C792, C799–C810, C804–C819, C821–C830, C837–C848, C842–C859, C861–C870, C877–C888, C882–C897, C899–C908, C915–C926, C920–C935, C937–C946, C953–C964, C958–C973, C975–C984, C991–C1002, C996–C1011, C1013–C1022, C1029–C1040, C1034–C1049, C1051–C1060, C1067–C1078, C1072–C1087, and C1089–C1098. N-linked (GlcNAc...) asparagine glycosylation is present at N46. N-linked (GlcNAc...) asparagine glycosylation occurs at N155. The EGF-like 5; calcium-binding domain maps to 182–219 (DVNECDIPGHCQHGGTCLNLPGSYQCQCPQGFTGQYCD). Residues 221-258 (LYVPCAPSPCVNGGTCRQTGDFTFECNCLPGFEGSTCE) enclose the EGF-like 6 domain. The EGF-like 7; calcium-binding domain occupies 260–296 (NIDDCPNHRCQNGGVCVDGVNTYNCRCPPQWTGQFCT). The EGF-like 8; calcium-binding domain maps to 298–336 (DVDECLLQPNACQNGGTCANRNGGYGCVCVNGWSGDDCS). Positions 338–374 (NIDDCAFASCTPGSTCIDRVASFSCMCPEGKAGLLCH) constitute an EGF-like 9; calcium-binding domain. In terms of domain architecture, EGF-like 10 spans 375-413 (LDDACISNPCHKGALCDTNPLNGQYICTCPQGYKGADCT). The EGF-like 11; calcium-binding domain maps to 415 to 454 (DVDECAMANSNPCEHAGKCVNTDGAFHCECLKGYAGPRCE). The region spanning 456–492 (DINECHSDPCQNDATCLDKIGGFTCLCMPGFKGVHCE) is the EGF-like 12; calcium-binding domain. An EGF-like 13; calcium-binding domain is found at 494–530 (EINECQSNPCVNNGQCVDKVNRFQCLCPPGFTGPVCQ). One can recognise an EGF-like 14; calcium-binding domain in the interval 532-568 (DIDDCSSTPCLNGAKCIDHPNGYECQCATGFTGVLCE). Residues 570-605 (NIDNCDPDPCHHGQCQDGIDSYTCICNPGYMGAICS) form the EGF-like 15; calcium-binding domain. In terms of domain architecture, EGF-like 16; calcium-binding spans 607-643 (QIDECYSSPCLNDGRCIDLVNGYQCNCQPGTSGVNCE). O-linked (Glc...) serine; alternate glycosylation occurs at S613. An O-linked (Xyl...) serine; alternate glycan is attached at S613. In terms of domain architecture, EGF-like 17; calcium-binding spans 645–680 (NFDDCASNPCIHGICMDGINRYSCVCSPGFTGQRCN). Residues 682 to 718 (DIDECASNPCRKGATCINGVNGFRCICPEGPHHPSCY) enclose the EGF-like 18; calcium-binding domain. The EGF-like 19 domain maps to 720–755 (QVNECLSNPCIHGNCTGGLSGYKCLCDAGWVGINCE). N-linked (GlcNAc...) asparagine glycosylation is present at N733. One can recognise an EGF-like 20; calcium-binding domain in the interval 757–793 (DKNECLSNPCQNGGTCDNLVNGYRCTCKKGFKGYNCQ). The EGF-like 21; calcium-binding domain maps to 795-831 (NIDECASNPCLNQGTCFDDISGYTCHCVLPYTGKNCQ). The EGF-like 22 domain occupies 833–871 (VLAPCSPNPCENAAVCKESPNFESYTCLCAPGWQGQRCT). Residues 873-909 (DIDECISKPCMNHGLCHNTQGSYMCECPPGFSGMDCE) enclose the EGF-like 23; calcium-binding domain. An EGF-like 24; calcium-binding domain is found at 911-947 (DIDDCLANPCQNGGSCMDGVNTFSCLCLPGFTGDKCQ). One can recognise an EGF-like 25; calcium-binding domain in the interval 949 to 985 (DMNECLSEPCKNGGTCSDYVNSYTCKCQAGFDGVHCE). The region spanning 987–1023 (NINECTESSCFNGGTCVDGINSFSCLCPVGFTGSFCL) is the EGF-like 26; calcium-binding domain. One can recognise an EGF-like 27; calcium-binding domain in the interval 1025-1061 (EINECSSHPCLNEGTCVDGLGTYRCSCPLGYTGKNCQ). EGF-like domains follow at residues 1063–1099 (LVNLCSRSPCKNKGTCVQKKAESQCLCPSGWAGAYCD) and 1101–1147 (PNVS…SYCE). An N-linked (GlcNAc...) asparagine glycan is attached at N1102. 24 disulfides stabilise this stretch: C1105-C1126, C1120-C1135, C1137-C1146, C1153-C1164, C1158-C1173, C1175-C1184, C1191-C1202, C1196-C1211, C1213-C1222, C1229-C1241, C1235-C1250, C1252-C1261, C1268-C1281, C1273-C1290, C1292-C1301, C1308-C1319, C1313-C1331, C1333-C1342, C1378-C1389, C1383-C1400, C1402-C1411, C1425-C1448, C1430-C1443, and C1439-C1455. In terms of domain architecture, EGF-like 30; calcium-binding spans 1149 to 1185 (QLDECASNPCQHGATCSDFIGGYRCECVPGYQGVNCE). Positions 1187 to 1223 (EVDECQNQPCQNGGTCIDLVNHFKCSCPPGTRGLLCE) constitute an EGF-like 31; calcium-binding domain. Positions 1225-1262 (NIDDCARGPHCLNGGQCMDRIGGYSCRCLPGFAGERCE) constitute an EGF-like 32; calcium-binding domain. 3 EGF-like domains span residues 1264-1302 (DINECLSNPCSSEGSLDCIQLTNDYLCVCRSAFTGRHCE), 1304-1343 (FVDVCPQMPCLNGGTCAVASNMPDGFICRCPPGFSGARCQ), and 1374-1412 (CESGCASSPCQHGGSCHPQRQPPYYSCQCAPPFSGSRCE). LNR repeat units follow at residues 1425-1465 (CLSQ…PWAN), 1466-1502 (CSSPLPCWDYINNQCDELCNTVECLFDNFECQGNSKT), and 1503-1544 (CKYD…NLAE). Residues 1425–1677 (CLSQYCADKA…SESLTPERTQ (253 aa)) are negative regulatory region (NRR). N-linked (GlcNAc...) asparagine glycosylation is present at N1465. Cystine bridges form between C1466–C1489, C1472–C1484, C1480–C1496, C1503–C1527, C1509–C1522, C1518–C1534, and C1632–C1639. Residues 1678 to 1698 (LLYLLAVAVVIILFIILLGVI) traverse the membrane as a helical segment. The Cytoplasmic segment spans residues 1699–2471 (MAKRKRKHGS…PPHNNMQVYA (773 aa)). T1716 is modified (phosphothreonine). Residues 1754 to 1788 (TSEHWVDDEGPQPKKVKAEDEALLSEEDDPIDRRP) are disordered. Residues 1774–1783 (EALLSEEDDP) are compositionally biased toward acidic residues. Residue S1778 is modified to Phosphoserine. T1802 is modified (phosphothreonine). At S1804 the chain carries Phosphoserine. The residue at position 1808 (T1808) is a Phosphothreonine. 6 ANK repeats span residues 1827-1871 (DGCT…SLQA), 1876-1905 (TGEMALHLAARYSRADAAKRLLDAGADANA), 1909-1939 (MGRCPLHAAVAADAQGVFQILIRNRVTDLDA), 1943-1972 (DGTTPLILAARLAVEGMVAELINCQADVNA), 1976-2005 (HGKSALHWAAAVNNVEATLLLLKNGANRDM), and 2009-2038 (KEETPLFLAAREGSYEAAKILLDHFANRDI). Residues S1842 and S1845 each carry the phosphoserine modification. 3 positions are modified to phosphoserine: S2070, S2078, and S2081. Disordered regions lie at residues 2091-2168 (FLSL…TSSP) and 2380-2471 (VGKY…QVYA). Phosphothreonine is present on T2097. The segment covering 2098 to 2107 (PMGKKSRRPS) has biased composition (basic residues). 4 stretches are compositionally biased toward polar residues: residues 2108–2117 (AKSTMPTSLP), 2137–2150 (EKVQLSESSVTLSP), 2159–2168 (TYVSDTTSSP), and 2388–2406 (SQHSYASSNAAERTPSHSG). Over residues 2417-2445 (PSPESPDQWSSSSPHSASDWSDVTTSPTP) the composition is skewed to low complexity.

Belongs to the NOTCH family. In terms of assembly, heterodimer of a C-terminal fragment N(TM) and an N-terminal fragment N(EC) which are probably linked by disulfide bonds. Interacts with MAML1, MAML2 and MAML3 which act as transcriptional coactivators for NOTCH2. Interacts with RELA/p65. Interacts with HIF1AN. Interacts (via ANK repeats) with TCIM, the interaction inhibits the nuclear translocation of NOTCH2 N2ICD. Interacts with CUL1, RBX1, SKP1 and FBXW7 that are SCF(FBXW7) E3 ubiquitin-protein ligase complex components. Interacts with MINAR1; this interaction increases MINAR1 stability and function. Interacts with NOTCH2NL (NOTCH2NLA, NOTCH2NLB and/or NOTCH2NLC); leading to enhance Notch signaling pathway in a non-cell-autonomous manner. Interacts with MDK; this interaction mediates a nuclear accumulation of NOTCH2 and therefore activation of NOTCH2 signaling leading to interaction between HES1 and STAT3. Interacts with MINAR2. Post-translationally, synthesized in the endoplasmic reticulum as an inactive form which is proteolytically cleaved by a furin-like convertase in the trans-Golgi network before it reaches the plasma membrane to yield an active, ligand-accessible form. Cleavage results in a C-terminal fragment N(TM) and a N-terminal fragment N(EC). Following ligand binding, it is cleaved by TNF-alpha converting enzyme (TACE) to yield a membrane-associated intermediate fragment called notch extracellular truncation (NEXT). This fragment is then cleaved by presenilin dependent gamma-secretase to release a notch-derived peptide containing the intracellular domain (NICD) from the membrane. In terms of processing, hydroxylated by HIF1AN. Can be either O-glucosylated or O-xylosylated at Ser-613 by POGLUT1. Post-translationally, phosphorylated by GSK3. GSK3-mediated phosphorylation is necessary for NOTCH2 recognition by FBXW7, ubiquitination and degradation via the ubiquitin proteasome pathway. As to expression, expressed in the brain, heart, kidney, lung, skeletal muscle and liver. Ubiquitously expressed in the embryo.

It is found in the cell membrane. The protein resides in the nucleus. It localises to the cytoplasm. Functions as a receptor for membrane-bound ligands Jagged-1 (JAG1), Jagged-2 (JAG2) and Delta-1 (DLL1) to regulate cell-fate determination. Upon ligand activation through the released notch intracellular domain (NICD) it forms a transcriptional activator complex with RBPJ/RBPSUH and activates genes of the enhancer of split locus. Affects the implementation of differentiation, proliferation and apoptotic programs. Involved in bone remodeling and homeostasis. In collaboration with RELA/p65 enhances NFATc1 promoter activity and positively regulates RANKL-induced osteoclast differentiation. Positively regulates self-renewal of liver cancer cells. In Homo sapiens (Human), this protein is Neurogenic locus notch homolog protein 2.